We begin with the raw amino-acid sequence, 151 residues long: 3-dehydroquinate dehydratase (151 aa).

Y26 (proton acceptor) is an active-site residue. Substrate contacts are provided by N75, H81, and D88. H101 functions as the Proton donor in the catalytic mechanism. Substrate is bound by residues 102 to 103 (LS) and R112.

This sequence belongs to the type-II 3-dehydroquinase family. In terms of assembly, homododecamer.

It catalyses the reaction 3-dehydroquinate = 3-dehydroshikimate + H2O. It functions in the pathway metabolic intermediate biosynthesis; chorismate biosynthesis; chorismate from D-erythrose 4-phosphate and phosphoenolpyruvate: step 3/7. In terms of biological role, catalyzes a trans-dehydration via an enolate intermediate. The chain is 3-dehydroquinate dehydratase from Shewanella sediminis (strain HAW-EB3).